The following is a 631-amino-acid chain: Sphingomyelin phosphodiesterase (631 aa).

The disordered stretch occupies residues 1-23 (MPRYGASLRQSCPRSGREQGQDG). Residues 1–46 (MPRYGASLRQSCPRSGREQGQDGTAGAPGLLWMGLVLALALALALA) form the signal peptide. A Saposin B-type domain is found at 87–171 (GNLTCPICKG…LLGSTCGHWD (85 aa)). Asn88 carries an N-linked (GlcNAc...) asparagine glycan. Disulfide bonds link Cys91–Cys167, Cys94–Cys159, and Cys122–Cys133. A glycan (N-linked (GlcNAc...) asparagine) is linked at Asn177. Residues Asp208 and His210 each contribute to the Zn(2+) site. Intrachain disulfides connect Cys223-Cys228 and Cys229-Cys252. Residues Asp280 and Asn320 each coordinate Zn(2+). N-linked (GlcNAc...) asparagine glycans are attached at residues Asn337 and Asn397. Cysteines 387 and 433 form a disulfide. Zn(2+) contacts are provided by His427, His459, and His461. Asn505 is a glycosylation site (N-linked (GlcNAc...) asparagine). Position 510 is a phosphoserine; by PKC/PRKCD (Ser510). Asn522 is a glycosylation site (N-linked (GlcNAc...) asparagine). Cystine bridges form between Cys586–Cys590 and Cys596–Cys609.

The protein belongs to the acid sphingomyelinase family. As to quaternary structure, monomer. Interacts with SORT1; the interaction is required for SMPD1 targeting to lysosomes. It depends on Zn(2+) as a cofactor. Proteolytically processed. Mature lysosomal form arises from C-terminal proteolytic processing of pro-sphingomyelin phosphodiesterase. In terms of processing, this form is generated following cleavage by CASP7 in the extracellular milieu. It shows increased activity. Post-translationally, both lysosomal and secreted forms are glycosylated but they show a differential pattern of glycosylation. Phosphorylated at Ser-510 by PRKCD upon stress stimuli. Phosphorylation is required for secretion.

Its subcellular location is the lysosome. The protein resides in the lipid droplet. It is found in the secreted. The protein localises to the extracellular space. It carries out the reaction a sphingomyelin + H2O = phosphocholine + an N-acylsphing-4-enine + H(+). The catalysed reaction is N-(octadecanoyl)-sphing-4-enine-1-phosphocholine + H2O = N-octadecanoylsphing-4-enine + phosphocholine + H(+). The enzyme catalyses 1,2-dihexadecanoyl-sn-glycero-3-phosphocholine + H2O = 1,2-dihexadecanoyl-sn-glycerol + phosphocholine + H(+). It catalyses the reaction a 1,2-diacyl-sn-glycero-3-phosphocholine + H2O = phosphocholine + a 1,2-diacyl-sn-glycerol + H(+). Its activity is regulated as follows. Hydrolysis of liposomal sphingomyelin is stimulated by incorporation of diacylglycerol (DAG), ceramide and free fatty acids into the liposomal membranes. Phosphatidylcholine hydrolysis is inhibited by incorporation of cholesterol, ceramide, DAG, monoacylglycerol and fatty acids. Antidepressants, namely amitriptyline, imipramine, desipramine, fluoxetine, sertraline, escitalopram, and maprotiline inhibit sphingomyelin phosphodiesterase activity. (Microbial infection) The secretory form is activated by P.aeruginosa, this activation results in the release of ceramide in the outer leaflet of the plasma membrane. With respect to regulation, (Microbial infection) The secretory form is activated by human coronavirus SARS-CoV-2, this activation results in the release of ceramide in the outer leaflet of the plasma membrane. Its function is as follows. Converts sphingomyelin to ceramide. Exists as two enzymatic forms that arise from alternative trafficking of a single protein precursor, one that is targeted to the endolysosomal compartment, whereas the other is released extracellularly. However, in response to various forms of stress, lysosomal exocytosis may represent a major source of the secretory form. In terms of biological role, in the lysosomes, converts sphingomyelin to ceramide. Plays an important role in the export of cholesterol from the intraendolysosomal membranes. Also has phospholipase C activities toward 1,2-diacylglycerolphosphocholine and 1,2-diacylglycerolphosphoglycerol. Modulates stress-induced apoptosis through the production of ceramide. Functionally, when secreted, modulates cell signaling with its ability to reorganize the plasma membrane by converting sphingomyelin to ceramide. Secreted form is increased in response to stress and inflammatory mediators such as IL1B, IFNG or TNF as well as upon infection with bacteria and viruses. Produces the release of ceramide in the outer leaflet of the plasma membrane playing a central role in host defense. Ceramide reorganizes these rafts into larger signaling platforms that are required to internalize P.aeruginosa, induce apoptosis and regulate the cytokine response in infected cells. In wounded cells, the lysosomal form is released extracellularly in the presence of Ca(2+) and promotes endocytosis and plasma membrane repair. This form is generated following cleavage by CASP7 in the extracellular milieu in response to bacterial infection. It shows increased ability to convert sphingomyelin to ceramide and promotes plasma membrane repair. Plasma membrane repair by ceramide counteracts the action of gasdermin-D (GSDMD) perforin (PRF1) pores that are formed in response to bacterial infection. Its function is as follows. (Microbial infection) Secretion is activated by bacteria such as P.aeruginosa, N.gonorrhoeae and others, this activation results in the release of ceramide in the outer leaflet of the plasma membrane which facilitates the infection. In terms of biological role, (Microbial infection) Secretion is activated by human coronaviruses SARS-CoV and SARS-CoV-2 as well as Zaire ebolavirus, this activation results in the release of ceramide in the outer leaflet of the plasma membrane which facilitates the infection. Functionally, lacks residues that bind the cofactor Zn(2+) and has no enzyme activity. In Homo sapiens (Human), this protein is Sphingomyelin phosphodiesterase.